We begin with the raw amino-acid sequence, 146 residues long: UPF0735 ACT domain-containing protein Teth514_2312 (146 aa).

The ACT domain maps to 71-146 (TLSMVLDHMP…GVRKIEILGE (76 aa)).

This sequence belongs to the UPF0735 family.

This chain is UPF0735 ACT domain-containing protein Teth514_2312, found in Thermoanaerobacter sp. (strain X514).